A 207-amino-acid chain; its full sequence is Ras-related protein Rab-8A (207 aa).

Residues Ser-17, Gly-18, Val-19, Gly-20, Lys-21, Thr-22, Cys-23, Ser-35, Ser-39, and Thr-40 each contribute to the GTP site. Position 22 (Thr-22) interacts with Mg(2+). Short sequence motifs (switch) lie at residues 31 to 45 and 63 to 80; these read DAFN…GIDF and DTAG…YYRG. Residues Thr-40 and Asp-63 each contribute to the Mg(2+) site. Gly-66 contributes to the GTP binding site. Residue Thr-72 is modified to Phosphothreonine. The GTP site is built by Asn-121, Lys-122, Asp-124, Ala-152, and Lys-153. Phosphoserine occurs at positions 181 and 185. A Cysteine methyl ester modification is found at Cys-204. Residue Cys-204 is the site of S-geranylgeranyl cysteine attachment. Residues 205–207 constitute a propeptide, removed in mature form; it reads VLL.

This sequence belongs to the small GTPase superfamily. Rab family. As to quaternary structure, interacts (GTP-bound form) with MICALL1; regulates RAB8A association with recycling endosomes. Interacts with MICALL2; competes with RAB13 and is involved in E-cadherin endocytic recycling. Interacts (GTP-bound form) with MICAL1, MICALCL, MICAL3, EHBP1 and EHBP1L1; at least in case of MICAL1, MICALCL, MICAL3 and EHBP1L1 two molecules of RAB8A can bind to one molecule of the effector protein; ternary complexes of RAB8A, RAB13 and either MICAL1 or EHBP1L1 are possible. Interacts with EHD1. Interacts with MAP4K2 and SYTL4. Interacts with SGSM1 and SGSM3. Interacts with RABIF, RIMS2, RPH3A and RPH3A. Interacts with OPTN. Interacts with RAB3IP, RAB3IP functions as guanine exchange factor (GEF). Interacts with MYO5B. Interacts with CIMAP3. Interacts with BIRC6/bruce. Interacts with OCRL. Interacts with AHI1. Interacts with DCDC1. Interacts with LRRK2; interaction facilitates phosphorylation of Thr-72. Interacts with RAB31P, GDI1, GDI2, CHM, CHML, RABGGTA, RABGGTB, TBC1D15 and INPP5B; these interactions are dependent on Thr-72 not being phosphorylated. Interacts with RILPL1 and RILPL2; these interactions are dependent on the phosphorylation of Thr-72 by LRRK2. Interacts with DZIP1; prevents inhibition by the GDP-dissociation inhibitor GDI2. Interacts (in GDP-bound form) with RAB3IP/Rabin8, RAB3IP functions as guanine exchange factor (GEF) towards RAB8A. Interacts (in GDP-bound form) with RPGR, RPGR functions as GEF towards RAB8A. Mg(2+) is required as a cofactor. Phosphorylation of Thr-72 in the switch II region by LRRK2 prevents the association of RAB regulatory proteins, including CHM, CHML and RAB GDP dissociation inhibitors GDI1 and GDI2. Phosphorylation by LRRK2 is required for localization to stressed lysosomes.

Its subcellular location is the cell membrane. It localises to the golgi apparatus. The protein resides in the endosome membrane. The protein localises to the recycling endosome membrane. It is found in the cell projection. Its subcellular location is the cilium. It localises to the cytoplasmic vesicle. The protein resides in the phagosome membrane. The protein localises to the cytoplasm. It is found in the cytoskeleton. Its subcellular location is the microtubule organizing center. It localises to the centrosome. The protein resides in the centriole. The protein localises to the cilium basal body. It is found in the midbody. Its subcellular location is the lysosome. It catalyses the reaction GTP + H2O = GDP + phosphate + H(+). With respect to regulation, regulated by guanine nucleotide exchange factors (GEFs) such as RAB3IP/Rabin8 and RPGR which promote the exchange of bound GDP for free GTP, GTPase activating proteins (GAPs) which increase the GTP hydrolysis activity, and GDP dissociation inhibitors (GDIs) which inhibit the dissociation of the nucleotide from the GTPase. Activated in response to insulin. Functionally, the small GTPases Rab are key regulators of intracellular membrane trafficking, from the formation of transport vesicles to their fusion with membranes. Rabs cycle between an inactive GDP-bound form and an active GTP-bound form that is able to recruit to membranes different sets of downstream effectors directly responsible for vesicle formation, movement, tethering and fusion. RAB8A is involved in polarized vesicular trafficking and neurotransmitter release. Together with RAB11A, RAB3IP, the exocyst complex, PARD3, PRKCI, ANXA2, CDC42 and DNMBP promotes transcytosis of PODXL to the apical membrane initiation sites (AMIS), apical surface formation and lumenogenesis. Regulates the compacted morphology of the Golgi. Together with MYO5B and RAB11A participates in epithelial cell polarization. Also involved in membrane trafficking to the cilium and ciliogenesis. Together with MICALL2, may also regulate adherens junction assembly. May play a role in insulin-induced transport to the plasma membrane of the glucose transporter GLUT4 and therefore play a role in glucose homeostasis. Involved in autophagy. Participates in the export of a subset of neosynthesized proteins through a Rab8-Rab10-Rab11-dependent endososomal export route. Targeted to and stabilized on stressed lysosomes through LRRK2 phosphorylation. Suppresses stress-induced lysosomal enlargement through EHBP1 and EHNP1L1 effector proteins. The chain is Ras-related protein Rab-8A (RAB8A) from Canis lupus familiaris (Dog).